The primary structure comprises 62 residues: Mu-conotoxin Lt5d (62 aa).

The signal sequence occupies residues 1–22 (MRCLPVFIILLLLIPSAPSVDA). Positions 23–48 (QPTTKDDVPLASLHDNAKRALQMFWN) are excised as a propeptide.

The protein belongs to the conotoxin T superfamily. Post-translationally, contains 2 disulfide bonds that can be either 'C1-C3, C2-C4' or 'C1-C4, C2-C3', since these disulfide connectivities have been observed for conotoxins with cysteine framework V (for examples, see AC P0DQQ7 and AC P81755). As to expression, expressed by the venom duct.

It localises to the secreted. In terms of biological role, mu-conotoxins block voltage-gated sodium channels (Nav). This toxin inhibits tetrodotoxin(TTX)-sensitive sodium channels, but does not affect TTX-resistant sodium channels. Reduces the amplitude of currents without changing the activation and inactivation kinetics of currents. This chain is Mu-conotoxin Lt5d, found in Conus litteratus (Lettered cone).